The sequence spans 513 residues: Maturase K (513 aa).

The protein belongs to the intron maturase 2 family. MatK subfamily.

The protein localises to the plastid. The protein resides in the chloroplast. Its function is as follows. Usually encoded in the trnK tRNA gene intron. Probably assists in splicing its own and other chloroplast group II introns. The protein is Maturase K of Arundo donax (Giant reed).